The following is a 581-amino-acid chain: Phosphoinositide phospholipase C 2 (581 aa).

In terms of domain architecture, EF-hand-like spans 26–102; that stretch reads EIKTIFEKYS…NPPLALHKVH (77 aa). The region spanning 103–248 is the PI-PLC X-box domain; sequence HDMDAPISHY…LKRRIIISTK (146 aa). Active-site residues include H118 and H164. The segment at 279–314 is disordered; it reads PSFIQRNKSEAKDDLDGNDDDDDDDDEDKSKINAPP. Residues 294–305 show a composition bias toward acidic residues; that stretch reads DGNDDDDDDDDE. Residues 317–433 enclose the PI-PLC Y-box domain; sequence KHLIAIHAGK…GYIKKPDLLL (117 aa). Residues 434-563 form the C2 domain; it reads KSGSDSDIFD…EGIRAFPLHS (130 aa).

It depends on Ca(2+) as a cofactor. Post-translationally, phosphorylation level varies significantly during early response to bacterial elicitor. As to expression, expressed in roots, shoots, leaves and flowers.

Its subcellular location is the cell membrane. The catalysed reaction is a 1,2-diacyl-sn-glycero-3-phospho-(1D-myo-inositol-4,5-bisphosphate) + H2O = 1D-myo-inositol 1,4,5-trisphosphate + a 1,2-diacyl-sn-glycerol + H(+). Functionally, the production of the second messenger molecules diacylglycerol (DAG) and inositol 1,4,5-trisphosphate (IP3) is mediated by activated phosphatidylinositol-specific phospholipase C enzymes. At physiological calcium concentration, the preferred substrate is phosphatidylinositol 4,5-bisphosphate versus phosphatidylinositol. The protein is Phosphoinositide phospholipase C 2 (PLC2) of Arabidopsis thaliana (Mouse-ear cress).